A 454-amino-acid chain; its full sequence is Histidine--tRNA ligase (454 aa).

Belongs to the class-II aminoacyl-tRNA synthetase family. Homodimer.

It localises to the cytoplasm. It catalyses the reaction tRNA(His) + L-histidine + ATP = L-histidyl-tRNA(His) + AMP + diphosphate + H(+). The chain is Histidine--tRNA ligase from Bacteroides fragilis (strain ATCC 25285 / DSM 2151 / CCUG 4856 / JCM 11019 / LMG 10263 / NCTC 9343 / Onslow / VPI 2553 / EN-2).